The primary structure comprises 201 residues: MSKPRVAIIIYSLYHHVYTLAESAKIGIEAAGVKPDLFQVPETLTPEILKLVKAPPKPDIPIAEPKILNNYDAFLFGIPTRFGNMPAQWKGFWDGTGGQWARGDLRGKYAGVFVSTGTPGGGQETTVINTLSTLAHHGIVYVPFGYGSPRLADLNEVHGGSPWGAGTFAGADGSREVTELEKSIAQQQGEDFIKTITQFKQ.

The 187-residue stretch at 6-192 (VAIIIYSLYH…SIAQQQGEDF (187 aa)) folds into the Flavodoxin-like domain. FMN is bound by residues 12-16 (SLYHH) and 112-164 (VFVS…SPWG).

This sequence belongs to the WrbA family. FMN serves as cofactor.

The protein localises to the cell membrane. The catalysed reaction is a quinone + NADH + H(+) = a quinol + NAD(+). It carries out the reaction a quinone + NADPH + H(+) = a quinol + NADP(+). In terms of biological role, flavodoxin-like protein (FLP) that plays a role in cell wall integrity, oxidative stress protection and virulence. FLPs act as NAD(P)H quinone oxidoreductases. Reduces ubiquinone (coenzyme Q), enabling it to serve as an antioxidant in the membrane. The chain is NAD(P)H quinone oxidoreductase PST2 from Candida albicans (strain SC5314 / ATCC MYA-2876) (Yeast).